A 684-amino-acid polypeptide reads, in one-letter code: Proprotein convertase subtilisin/kexin type 9 (684 aa).

The first 28 residues, 1–28 (MGTVSSRRLWWPLPLLLLLLLGPPGARA), serve as a signal peptide directing secretion. Residues 29 to 151 (QEDDDGDYEE…IEEDSSVFAQ (123 aa)) constitute a propeptide that is removed on maturation. Sulfotyrosine is present on tyrosine 36. At serine 45 the chain carries Phosphoserine. Residues 75–148 (TYVVVLKDSD…VDYIEEDSSV (74 aa)) form the Inhibitor I9 domain. The Peptidase S8 domain occupies 154–460 (PWNLERITPA…GWQLFCRTVW (307 aa)). Catalysis depends on charge relay system residues aspartate 185 and histidine 225. 2 disulfide bridges follow: cysteine 222/cysteine 254 and cysteine 322/cysteine 357. The active-site Charge relay system is the serine 385. Residues 451-684 (GWQLFCRTVW…AICCRSRHLA (234 aa)) are C-terminal domain. 3 disulfide bridges follow: cysteine 456–cysteine 526, cysteine 476–cysteine 525, and cysteine 485–cysteine 508. A glycan (N-linked (GlcNAc...) asparagine) is linked at asparagine 532. Disulfide bonds link cysteine 533–cysteine 600, cysteine 551–cysteine 599, cysteine 561–cysteine 587, cysteine 607–cysteine 678, cysteine 625–cysteine 677, and cysteine 634–cysteine 653.

This sequence belongs to the peptidase S8 family. As to quaternary structure, monomer. Can self-associate to form dimers and higher multimers which may have increased LDLR degrading activity. The precursor protein but not the mature protein may form multimers. Interacts with APOB, VLDLR, LRP8/APOER2 and BACE1. The full-length immature form (pro-PCSK9) interacts with SCNN1A, SCNN1B and SCNN1G. The pro-PCSK9 form (via C-terminal domain) interacts with LDLR. Interacts (via the C-terminal domain) with ANXA2 (via repeat Annexin 1); the interaction inhibits the degradation of LDLR. Requires Ca(2+) as cofactor. Post-translationally, cleavage by furin and PCSK5 generates a truncated inactive protein that is unable to induce LDLR degradation. Undergoes autocatalytic cleavage in the endoplasmic reticulum to release the propeptide from the N-terminus and the cleavage of the propeptide is strictly required for its maturation and activation. The cleaved propeptide however remains associated with the catalytic domain through non-covalent interactions, preventing potential substrates from accessing its active site. As a result, it is secreted from cells as a propeptide-containing, enzymatically inactive protein. In terms of processing, phosphorylation protects the propeptide against proteolysis.

The protein resides in the cytoplasm. It localises to the secreted. The protein localises to the endosome. Its subcellular location is the lysosome. It is found in the cell surface. The protein resides in the endoplasmic reticulum. It localises to the golgi apparatus. Its activity is regulated as follows. Its proteolytic activity is autoinhibited by the non-covalent binding of the propeptide to the catalytic domain. Inhibited by EGTA. Functionally, crucial player in the regulation of plasma cholesterol homeostasis. Binds to low-density lipid receptor family members: low density lipoprotein receptor (LDLR), very low density lipoprotein receptor (VLDLR), apolipoprotein E receptor (LRP1/APOER) and apolipoprotein receptor 2 (LRP8/APOER2), and promotes their degradation in intracellular acidic compartments. Acts via a non-proteolytic mechanism to enhance the degradation of the hepatic LDLR through a clathrin LDLRAP1/ARH-mediated pathway. May prevent the recycling of LDLR from endosomes to the cell surface or direct it to lysosomes for degradation. Can induce ubiquitination of LDLR leading to its subsequent degradation. Inhibits intracellular degradation of APOB via the autophagosome/lysosome pathway in a LDLR-independent manner. Involved in the disposal of non-acetylated intermediates of BACE1 in the early secretory pathway. Inhibits epithelial Na(+) channel (ENaC)-mediated Na(+) absorption by reducing ENaC surface expression primarily by increasing its proteasomal degradation. Regulates neuronal apoptosis via modulation of LRP8/APOER2 levels and related anti-apoptotic signaling pathways. This Plecturocebus moloch (Dusky titi monkey) protein is Proprotein convertase subtilisin/kexin type 9 (PCSK9).